Consider the following 346-residue polypeptide: MYNGSCCRIEGDTISQVMPPLLIVAFVLGALGNGVALCGFCFHMKTWKPSTVYLFNLAVADFLLMICLPFRTDYYLRRRHWAFGDIPCRVGLFTLAMNRAGSIVFLTVVAADRYFKVVHPHHAVNTISTRVAAGIVCTLWALVILGTVYLLLENHLCVQETAVSCESFIMESANGWHDIMFQLEFFMPLGIILFCSFKIVWSLRRRQQLARQARMKKATRFIMVVAIVFITCYLPSVSARLYFLWTVPSSACDPSVHGALHITLSFTYMNSMLDPLVYYFSSPSFPKFYNKLKICSLKPKQPGHSKTQRPEEMPISNLGRRSCISVANSFQSQSDGQWDPHIVEWH.

Topologically, residues 1-21 (MYNGSCCRIEGDTISQVMPPL) are extracellular. Asn-3 carries an N-linked (GlcNAc...) asparagine glycan. The helical transmembrane segment at 22-42 (LIVAFVLGALGNGVALCGFCF) threads the bilayer. Residues 43–49 (HMKTWKP) lie on the Cytoplasmic side of the membrane. The helical transmembrane segment at 50–70 (STVYLFNLAVADFLLMICLPF) threads the bilayer. At 71–89 (RTDYYLRRRHWAFGDIPCR) the chain is on the extracellular side. Cys-88 and Cys-165 are disulfide-bonded. Residues 90 to 110 (VGLFTLAMNRAGSIVFLTVVA) traverse the membrane as a helical segment. Residues 111–130 (ADRYFKVVHPHHAVNTISTR) are Cytoplasmic-facing. The helical transmembrane segment at 131–151 (VAAGIVCTLWALVILGTVYLL) threads the bilayer. Over 152-182 (LENHLCVQETAVSCESFIMESANGWHDIMFQ) the chain is Extracellular. Residues 183 to 203 (LEFFMPLGIILFCSFKIVWSL) traverse the membrane as a helical segment. Over 204–220 (RRRQQLARQARMKKATR) the chain is Cytoplasmic. Residues 221 to 241 (FIMVVAIVFITCYLPSVSARL) traverse the membrane as a helical segment. Residues 242-261 (YFLWTVPSSACDPSVHGALH) lie on the Extracellular side of the membrane. The chain crosses the membrane as a helical span at residues 262–281 (ITLSFTYMNSMLDPLVYYFS). Over 282 to 346 (SPSFPKFYNK…QWDPHIVEWH (65 aa)) the chain is Cytoplasmic.

Belongs to the G-protein coupled receptor 1 family. Expressed abundantly in brown and white fat. It also detectable at lower levels in liver, kidney, skeletal muscle, brain and pituitary. Not detected in frontal, temporal and occipital lobes of the cortex, basal forebrain, caudate nucleus, nucleus accumbens and hippocampus.

It localises to the cell membrane. Its function is as follows. Acts as a receptor for L-lactate and mediates its anti-lipolytic effect through a G(i)-protein-mediated pathway. The sequence is that of Hydroxycarboxylic acid receptor 1 (HCAR1) from Homo sapiens (Human).